The chain runs to 504 residues: Pre-mRNA-processing factor 19 (504 aa).

Serine 2 is modified (N-acetylserine). The U-box domain occupies serine 2–alanine 73. Positions alanine 68 to glycine 223 are may mediate interaction with PSMC5. 4 positions are modified to N6-acetyllysine: lysine 122, lysine 179, lysine 244, and lysine 261. The stretch at alanine 219–threonine 259 is one WD 1 repeat. WD repeat units lie at residues glycine 262–valine 301, alanine 304–threonine 345, threonine 348–asparagine 387, glycine 390–threonine 429, aspartate 433–threonine 472, and glutamate 473–serine 503.

This sequence belongs to the WD repeat PRP19 family. In terms of assembly, homotetramer. Component of activated, catalytic and post-catalytic spliceosomes. Component of the Prp19 complex/PRP19C/Nineteen complex/NTC and related complexes described as PRP19-CDC5L splicing complex and PSO4 complex. A homotetramer of PRPF19, CDC5L, PLRG1 and BCAS2 constitute the core of those complexes. The interaction with CDC5L, PLRG1 and BCAS2 is direct within this core complex. At least three less stably associated proteins CTNNBL1, CWC15 and HSPA8 are found in the Prp19 complex. The Prp19 complex associates with the spliceosome during its assembly and remodeling recruiting additional proteins. Component of the XAB2 complex, a multimeric protein complex composed of XAB2, PRPF19, AQR, ZNF830, ISY1, and PPIE. Interacts with CWC22 and EIF4A3 in an RNA-independent manner. Interacts with RPA1 and RPA2; the PRP19-CDC5L complex is recruited to the sites of DNA repair where it interacts with the replication protein A complex (RPA). Interacts with SETMAR; required for SETMAR recruitment to site of DNA damage. Interacts with U2AF2; the interaction is direct and recruits the Prp19 complex to RNA polymerase II C-terminal domain (CTD) and the pre-mRNA. Interacts with PRPF3. Interacts with APEX1, DNTT and PSMB4. Interacts with PSMC5. Interacts with KNSTRN. Interacts (via N-terminus) with CDC5L. Interacts with KHDC4. Interacts with USB1. Interacts with DDX41. As to expression, ubiquitous. Weakly expressed in senescent cells of different tissue origins. Highly expressed in tumor cell lines.

Its subcellular location is the nucleus. The protein resides in the nucleoplasm. It localises to the cytoplasm. It is found in the cytoskeleton. The protein localises to the spindle. Its subcellular location is the lipid droplet. The catalysed reaction is S-ubiquitinyl-[E2 ubiquitin-conjugating enzyme]-L-cysteine + [acceptor protein]-L-lysine = [E2 ubiquitin-conjugating enzyme]-L-cysteine + N(6)-ubiquitinyl-[acceptor protein]-L-lysine.. Its pathway is protein modification; protein ubiquitination. Its function is as follows. Ubiquitin-protein ligase which is a core component of several complexes mainly involved pre-mRNA splicing and DNA repair. Required for pre-mRNA splicing as component of the spliceosome. Core component of the PRP19C/Prp19 complex/NTC/Nineteen complex which is part of the spliceosome and participates in its assembly, its remodeling and is required for its activity. During assembly of the spliceosome, mediates 'Lys-63'-linked polyubiquitination of the U4 spliceosomal protein PRPF3. Ubiquitination of PRPF3 allows its recognition by the U5 component PRPF8 and stabilizes the U4/U5/U6 tri-snRNP spliceosomal complex. Recruited to RNA polymerase II C-terminal domain (CTD) and the pre-mRNA, it may also couple the transcriptional and spliceosomal machineries. The XAB2 complex, which contains PRPF19, is also involved in pre-mRNA splicing, transcription and transcription-coupled repair. Beside its role in pre-mRNA splicing PRPF19, as part of the PRP19-CDC5L complex, plays a role in the DNA damage response/DDR. It is recruited to the sites of DNA damage by the RPA complex where PRPF19 directly ubiquitinates RPA1 and RPA2. 'Lys-63'-linked polyubiquitination of the RPA complex allows the recruitment of the ATR-ATRIP complex and the activation of ATR, a master regulator of the DNA damage response. May also play a role in DNA double-strand break (DSB) repair by recruiting the repair factor SETMAR to altered DNA. As part of the PSO4 complex may also be involved in the DNA interstrand cross-links/ICLs repair process. In addition, may also mediate 'Lys-48'-linked polyubiquitination of substrates and play a role in proteasomal degradation. May play a role in the biogenesis of lipid droplets. May play a role in neural differentiation possibly through its function as part of the spliceosome. The chain is Pre-mRNA-processing factor 19 from Homo sapiens (Human).